Consider the following 366-residue polypeptide: Spermine synthase (366 aa).

The residue at position 2 (Ala-2) is an N-acetylalanine. Ser-57 is subject to Phosphoserine. Residues 122 to 362 (RYWPTADGRL…ELWVFYTVWK (241 aa)) enclose the PABS domain. Gln-148 lines the S-adenosyl 3-(methylsulfanyl)propylamine pocket. Spermidine is bound by residues Tyr-177 and Asp-201. Residues Glu-220 and 255-256 (DC) each bind S-adenosyl 3-(methylsulfanyl)propylamine. The active-site Proton acceptor is the Asp-276. 2 residues coordinate spermidine: Tyr-351 and Glu-353.

The protein belongs to the spermidine/spermine synthase family. As to quaternary structure, homodimer. Dimerization is mediated through the N-terminal domain and seems to be required for activity as deletion of the N-terminal domain causes complete loss of activity.

It catalyses the reaction S-adenosyl 3-(methylsulfanyl)propylamine + spermidine = spermine + S-methyl-5'-thioadenosine + H(+). The protein operates within amine and polyamine biosynthesis; spermine biosynthesis; spermine from spermidine: step 1/1. In terms of biological role, catalyzes the production of spermine from spermidine and decarboxylated S-adenosylmethionine (dcSAM). This Homo sapiens (Human) protein is Spermine synthase.